The chain runs to 407 residues: Phosphopentomutase (407 aa).

The Mn(2+) site is built by D10, D306, H311, D347, H348, and H359.

Belongs to the phosphopentomutase family. Mn(2+) serves as cofactor.

It is found in the cytoplasm. The enzyme catalyses 2-deoxy-alpha-D-ribose 1-phosphate = 2-deoxy-D-ribose 5-phosphate. The catalysed reaction is alpha-D-ribose 1-phosphate = D-ribose 5-phosphate. Its pathway is carbohydrate degradation; 2-deoxy-D-ribose 1-phosphate degradation; D-glyceraldehyde 3-phosphate and acetaldehyde from 2-deoxy-alpha-D-ribose 1-phosphate: step 1/2. In terms of biological role, isomerase that catalyzes the conversion of deoxy-ribose 1-phosphate (dRib-1-P) and ribose 1-phosphate (Rib-1-P) to deoxy-ribose 5-phosphate (dRib-5-P) and ribose 5-phosphate (Rib-5-P), respectively. This Pectobacterium carotovorum subsp. carotovorum (strain PC1) protein is Phosphopentomutase.